Consider the following 138-residue polypeptide: Large ribosomal subunit protein eL27 (138 aa).

It belongs to the eukaryotic ribosomal protein eL27 family.

The protein is Large ribosomal subunit protein eL27 (RPL27) of Solanum tuberosum (Potato).